A 337-amino-acid polypeptide reads, in one-letter code: D-alanine--D-alanine ligase (337 aa).

Residues 124–330 form the ATP-grasp domain; it reads KMWFSALGIP…FTEYLSLVIN (207 aa). 154 to 209 is a binding site for ATP; the sequence is ALAQWGSIFVKAASQGSSVGCYKVDDSAKVAGVLKDAFGYAPYVIVEKTIKARELE. Positions 284, 297, and 299 each coordinate Mg(2+).

It belongs to the D-alanine--D-alanine ligase family. Mg(2+) is required as a cofactor. It depends on Mn(2+) as a cofactor.

The protein resides in the cytoplasm. The enzyme catalyses 2 D-alanine + ATP = D-alanyl-D-alanine + ADP + phosphate + H(+). It functions in the pathway cell wall biogenesis; peptidoglycan biosynthesis. Functionally, cell wall formation. This Shewanella baltica (strain OS223) protein is D-alanine--D-alanine ligase.